A 344-amino-acid chain; its full sequence is Holliday junction branch migration complex subunit RuvB (344 aa).

The interval 1-181 (MERIVTPAEM…FGVLCAMEYY (181 aa)) is large ATPase domain (RuvB-L). Residues leucine 20, arginine 21, glycine 62, lysine 65, threonine 66, threonine 67, 128 to 130 (EDY), arginine 171, tyrosine 181, and arginine 218 contribute to the ATP site. Threonine 66 is a Mg(2+) binding site. The interval 182 to 252 (DENQLKEIVI…EAREALELLE (71 aa)) is small ATPAse domain (RuvB-S). The interval 255–344 (NQGFDKVDNK…SNKGQTSFFK (90 aa)) is head domain (RuvB-H). DNA-binding residues include arginine 310 and arginine 315.

It belongs to the RuvB family. Homohexamer. Forms an RuvA(8)-RuvB(12)-Holliday junction (HJ) complex. HJ DNA is sandwiched between 2 RuvA tetramers; dsDNA enters through RuvA and exits via RuvB. An RuvB hexamer assembles on each DNA strand where it exits the tetramer. Each RuvB hexamer is contacted by two RuvA subunits (via domain III) on 2 adjacent RuvB subunits; this complex drives branch migration. In the full resolvosome a probable DNA-RuvA(4)-RuvB(12)-RuvC(2) complex forms which resolves the HJ.

Its subcellular location is the cytoplasm. The enzyme catalyses ATP + H2O = ADP + phosphate + H(+). The RuvA-RuvB-RuvC complex processes Holliday junction (HJ) DNA during genetic recombination and DNA repair, while the RuvA-RuvB complex plays an important role in the rescue of blocked DNA replication forks via replication fork reversal (RFR). RuvA specifically binds to HJ cruciform DNA, conferring on it an open structure. The RuvB hexamer acts as an ATP-dependent pump, pulling dsDNA into and through the RuvAB complex. RuvB forms 2 homohexamers on either side of HJ DNA bound by 1 or 2 RuvA tetramers; 4 subunits per hexamer contact DNA at a time. Coordinated motions by a converter formed by DNA-disengaged RuvB subunits stimulates ATP hydrolysis and nucleotide exchange. Immobilization of the converter enables RuvB to convert the ATP-contained energy into a lever motion, pulling 2 nucleotides of DNA out of the RuvA tetramer per ATP hydrolyzed, thus driving DNA branch migration. The RuvB motors rotate together with the DNA substrate, which together with the progressing nucleotide cycle form the mechanistic basis for DNA recombination by continuous HJ branch migration. Branch migration allows RuvC to scan DNA until it finds its consensus sequence, where it cleaves and resolves cruciform DNA. In Clostridium botulinum (strain Alaska E43 / Type E3), this protein is Holliday junction branch migration complex subunit RuvB.